Here is a 110-residue protein sequence, read N- to C-terminus: Large ribosomal subunit protein uL22 (110 aa).

It belongs to the universal ribosomal protein uL22 family. Part of the 50S ribosomal subunit.

Its function is as follows. This protein binds specifically to 23S rRNA; its binding is stimulated by other ribosomal proteins, e.g. L4, L17, and L20. It is important during the early stages of 50S assembly. It makes multiple contacts with different domains of the 23S rRNA in the assembled 50S subunit and ribosome. The globular domain of the protein is located near the polypeptide exit tunnel on the outside of the subunit, while an extended beta-hairpin is found that lines the wall of the exit tunnel in the center of the 70S ribosome. The chain is Large ribosomal subunit protein uL22 from Alkaliphilus metalliredigens (strain QYMF).